Reading from the N-terminus, the 415-residue chain is Multidrug resistance protein MdtA (415 aa).

Residues 1–21 (MKGSYKSRWVIVIVVVIAAIA) form the signal peptide. Disordered regions lie at residues 32-60 (SRSAAPGATKQAQQSPAGGRRGMRSGPLA) and 392-415 (EAQSATTPEEKATSREYAKKGARS). Residues 399–415 (PEEKATSREYAKKGARS) are compositionally biased toward basic and acidic residues.

Belongs to the membrane fusion protein (MFP) (TC 8.A.1) family. Part of a tripartite efflux system composed of MdtA, MdtB and MdtC.

It is found in the cell inner membrane. Functionally, the MdtABC tripartite complex confers resistance against novobiocin and deoxycholate. In Escherichia coli (strain 55989 / EAEC), this protein is Multidrug resistance protein MdtA.